The primary structure comprises 213 residues: Protein PAE0745 (213 aa).

Residues 8-201 enclose the AMMECR1 domain; it reads EEGTFLVRLA…EKSPGGEVYE (194 aa).

The polypeptide is Protein PAE0745 (Pyrobaculum aerophilum (strain ATCC 51768 / DSM 7523 / JCM 9630 / CIP 104966 / NBRC 100827 / IM2)).